A 466-amino-acid polypeptide reads, in one-letter code: Soluble pyridine nucleotide transhydrogenase (466 aa).

36–45 serves as a coordination point for FAD; the sequence is ERYQNVGGGC.

It belongs to the class-I pyridine nucleotide-disulfide oxidoreductase family. FAD serves as cofactor.

The protein localises to the cytoplasm. The catalysed reaction is NAD(+) + NADPH = NADH + NADP(+). Functionally, conversion of NADPH, generated by peripheral catabolic pathways, to NADH, which can enter the respiratory chain for energy generation. This is Soluble pyridine nucleotide transhydrogenase from Shigella boydii serotype 18 (strain CDC 3083-94 / BS512).